We begin with the raw amino-acid sequence, 210 residues long: Imidazoleglycerol-phosphate dehydratase (210 aa).

The segment at 185-210 is disordered; sequence PRRGGSIPSSKGVLEQAGDNNTEKSK.

It belongs to the imidazoleglycerol-phosphate dehydratase family.

Its subcellular location is the cytoplasm. It carries out the reaction D-erythro-1-(imidazol-4-yl)glycerol 3-phosphate = 3-(imidazol-4-yl)-2-oxopropyl phosphate + H2O. It participates in amino-acid biosynthesis; L-histidine biosynthesis; L-histidine from 5-phospho-alpha-D-ribose 1-diphosphate: step 6/9. This Prochlorococcus marinus (strain SARG / CCMP1375 / SS120) protein is Imidazoleglycerol-phosphate dehydratase.